We begin with the raw amino-acid sequence, 471 residues long: Collagenase 3 (471 aa).

The first 19 residues, 1-19 (MHPGVLAAFLFLSWTHCRA), serve as a signal peptide directing secretion. Positions 20-103 (LPLPSGGDED…PRCGVPDVGE (84 aa)) are cleaved as a propeptide — activation peptide. Residues 94-101 (PRCGVPDV) carry the Cysteine switch motif. Cys-96 is a Zn(2+) binding site. N-linked (GlcNAc...) asparagine glycosylation occurs at Asn-117. A Ca(2+)-binding site is contributed by Asp-128. Residue Asn-152 is glycosylated (N-linked (GlcNAc...) asparagine). Asp-162 is a binding site for Ca(2+). The Zn(2+) site is built by His-172 and Asp-174. Residues 176-246 (YPFDGPSGLL…GALMFPIYTY (71 aa)) form an interaction with TIMP2 region. Asp-179, Gly-180, Ser-182, and Leu-184 together coordinate Ca(2+). Residue His-187 coordinates Zn(2+). 3 residues coordinate Ca(2+): Asn-194, Gly-196, and Asp-198. Residue His-200 participates in Zn(2+) binding. Positions 202, 203, and 205 each coordinate Ca(2+). His-222 provides a ligand contact to Zn(2+). Glu-223 is a catalytic residue. Zn(2+) contacts are provided by His-226, His-232, and Met-240. Positions 263–284 (QSLYGPGDEDPNPKHPKTPDKC) are disordered. The segment at 268 to 471 (PGDEDPNPKH…VMPANSILWC (204 aa)) is interaction with collagen. The span at 273–284 (PNPKHPKTPDKC) shows a compositional bias: basic and acidic residues. Hemopexin repeat units lie at residues 281-330 (PDKC…WPEL), 331-377 (PNRI…GLPK), 379-427 (VKKI…FPGI), and 428-471 (GDKV…ILWC). Cys-284 and Cys-471 are oxidised to a cystine. Ca(2+) is bound by residues Asp-291, Ile-293, Asp-335, and Ala-337. Phosphotyrosine; by PKDCC is present on Tyr-366. Ca(2+) contacts are provided by Ser-383, Ala-385, Asp-432, and Val-434.

This sequence belongs to the peptidase M10A family. As to quaternary structure, monomer. Interacts with TIMP1, TIMP2 and TIMP3. Binds (via the C-terminal region) to collagen. Ca(2+) is required as a cofactor. Requires Zn(2+) as cofactor. The proenzyme is activated by removal of the propeptide; this cleavage can be effected by other matrix metalloproteinases, such as MMP2, MMP3 and MMP14 and may involve several cleavage steps. Cleavage can also be autocatalytic, after partial maturation by another protease or after treatment with 4-aminophenylmercuric acetate (APMA) (in vitro). Post-translationally, N-glycosylated. In terms of processing, tyrosine phosphorylated by PKDCC/VLK. As to expression, detected in fetal cartilage and calvaria, in chondrocytes of hypertrophic cartilage in vertebrae and in the dorsal end of ribs undergoing ossification, as well as in osteoblasts and periosteal cells below the inner periosteal region of ossified ribs. Detected in chondrocytes from in joint cartilage that have been treated with TNF and IL1B, but not in untreated chondrocytes. Detected in T lymphocytes. Detected in breast carcinoma tissue.

Its subcellular location is the secreted. It localises to the extracellular space. It is found in the extracellular matrix. With respect to regulation, inhibited by TIMP1, TIMP2 and TIMP3. Inhibited by acetohydroxamic acid and other zinc chelators. In terms of biological role, plays a role in the degradation of extracellular matrix proteins including fibrillar collagen, fibronectin, TNC and ACAN. Cleaves triple helical collagens, including type I, type II and type III collagen, but has the highest activity with soluble type II collagen. Can also degrade collagen type IV, type XIV and type X. May also function by activating or degrading key regulatory proteins, such as TGFB1 and CCN2. Plays a role in wound healing, tissue remodeling, cartilage degradation, bone development, bone mineralization and ossification. Required for normal embryonic bone development and ossification. Plays a role in the healing of bone fractures via endochondral ossification. Plays a role in wound healing, probably by a mechanism that involves proteolytic activation of TGFB1 and degradation of CCN2. Plays a role in keratinocyte migration during wound healing. May play a role in cell migration and in tumor cell invasion. The polypeptide is Collagenase 3 (MMP13) (Homo sapiens (Human)).